The sequence spans 201 residues: Oligoribonuclease (201 aa).

Positions 20-183 constitute an Exonuclease domain; sequence LVWLDMEMTG…ADIHESIDEL (164 aa). Tyr-141 is an active-site residue.

Belongs to the oligoribonuclease family.

Its subcellular location is the cytoplasm. Functionally, 3'-to-5' exoribonuclease specific for small oligoribonucleotides. The chain is Oligoribonuclease from Burkholderia mallei (strain NCTC 10229).